Reading from the N-terminus, the 312-residue chain is Bifunctional pinoresinol-lariciresinol reductase 1 (312 aa).

Residues Gly10–Gly16, Arg35, and Lys44 each bind NADP(+). Lys136 acts as the Proton acceptor in catalysis. Arg140 contacts NADP(+). Position 268 (His268) interacts with substrate.

It belongs to the NmrA-type oxidoreductase family. Isoflavone reductase subfamily. Dimer. In terms of tissue distribution, expressed in seeds and roots, but not in stems. Detected in leaves.

The catalysed reaction is (-)-lariciresinol + NADP(+) = (-)-pinoresinol + NADPH + H(+). It catalyses the reaction (+)-secoisolariciresinol + NADP(+) = (-)-lariciresinol + NADPH + H(+). Reductase involved in lignan biosynthesis. Catalyzes the enantioselective conversion of (-)-pinoresinol into (-)-lariciresinol and of (-)-lariciresinol into (+)-secoisolariciresinol. Abstracts the 4R-hydride from the NADPH cofactor during catalysis. This chain is Bifunctional pinoresinol-lariciresinol reductase 1 (PLR_Lu1), found in Linum usitatissimum (Flax).